Consider the following 436-residue polypeptide: MQVLRLDRRHYKSGKIRRAMSSRIPGFYKLSVEERLKKVAEFAGLSDEEVKAVLSQGLPLDVADRMIENVIGTFELPLGIATNFLIDGKDYLIPMAIEEPSVVAAASNAARMARESGGFTTDYTGSLMIGQIQVTKLLNPNAAKFEVLRQKDEIIERANECDPMLVNLGGGCKDIEARVIDTIMGKMLIVHLIVDVKDAMGANAVNTMCEKVAPFIERITGGKVYLRIISNLAAYRLARAKAVFDKDVIGGEEVVEGIMLAYAFAAADPFRCATHNKGIMNGISALMIATGNDFRAIEAGAHSYAAIGGYKPLTTYEVDRKGNLVGTIEIPMAVGVIGGATKVNPLAKISLKILGVNTAEELARVAAALGLAQNFAALRALATEGIQRGHMELHARNLAIMAGATGDEVDRVVEIMVRDGKIRLDYAKEVLERLRS.

Catalysis depends on charge relay system residues Glu-99, Lys-277, and Asp-293. His-390 functions as the Proton donor in the catalytic mechanism.

It belongs to the HMG-CoA reductase family.

It catalyses the reaction (R)-mevalonate + 2 NADP(+) + CoA = (3S)-3-hydroxy-3-methylglutaryl-CoA + 2 NADPH + 2 H(+). It functions in the pathway metabolic intermediate biosynthesis; (R)-mevalonate biosynthesis; (R)-mevalonate from acetyl-CoA: step 3/3. Its function is as follows. Converts HMG-CoA to mevalonate. The chain is 3-hydroxy-3-methylglutaryl-coenzyme A reductase (hmgA) from Archaeoglobus fulgidus (strain ATCC 49558 / DSM 4304 / JCM 9628 / NBRC 100126 / VC-16).